A 289-amino-acid polypeptide reads, in one-letter code: Transcription factor MafA (289 aa).

Positions 52–73 (STPISTPCSSVPSSPSFCAPSP) are enriched in low complexity. Disordered regions lie at residues 52–87 (STPI…PNAA) and 126–164 (HHHH…HHHH). Positions 74-87 (GAQSGVNPSNPNAA) are enriched in polar residues. Over residues 152-164 (GHHHQVHHHHHHH) the composition is skewed to basic residues. The basic motif stretch occupies residues 201–226 (RLKQKRRTLKNRGYAQSCRYKRVQQR). The bZIP domain occupies 201–264 (RLKQKRRTLK…DLYKDKYEKL (64 aa)). The leucine-zipper stretch occupies residues 229–250 (LETEKCQLQSQVEQLKQEVSRL). Residues 266-289 (SRSFTTRESPPQGNPGKANADFFM) form a disordered region. The segment covering 267-276 (RSFTTRESPP) has biased composition (polar residues).

The protein belongs to the bZIP family. Maf subfamily.

Its subcellular location is the nucleus. Functionally, transcription factor, possibly involved in transcription regulation during lens development. In Xenopus tropicalis (Western clawed frog), this protein is Transcription factor MafA (mafa).